The following is a 444-amino-acid chain: Protein kinase C and casein kinase substrate in neurons protein 1 (444 aa).

Phosphoserine occurs at positions 2 and 79. Positions 13–283 (EETTDSFWEV…AIRGADAQDD (271 aa)) constitute an F-BAR domain. Residues 26-275 (KRTVKRIDDG…QVYRELEQAI (250 aa)) are a coiled coil. Thr-184 carries the post-translational modification Phosphothreonine. Residues 313-384 (AAKKEKQPKK…NGGSNPFDED (72 aa)) are disordered. Over residues 314 to 324 (AKKEKQPKKAE) the composition is skewed to basic and acidic residues. Residues 336-358 (ESTSQAGDRGSVSSYDRGQTYAT) show a composition bias toward polar residues. Ser-346, Ser-348, Ser-349, Ser-361, and Ser-365 each carry phosphoserine. One can recognise an SH3 domain in the interval 385 to 444 (AKGVRVRALYDYDGQEQDELSFKAGDELTKLGEEDEQGWCRGRLDSGQLGLYPANYVEVV). The residue at position 394 (Tyr-394) is a Phosphotyrosine. Residues Ser-405 and Ser-430 each carry the phosphoserine modification.

The protein belongs to the PACSIN family. Homodimer. May form heterooligomers with other PACSINs. Interacts with MAPT. Interacts (via SH3 domain) with SYNJ1 and WASL. Interacts (via SH3 domain) with DNM1; the interaction is reduced by DNM1 phosphorylation. Interacts with DNM2 and DNM3. Interacts with both COBL and DBNL. Identified in a complex composed of COBL, PACSIN1 and WASL. Interacts with EHD1 and EHD3. Interacts with TRPV4. Phosphorylated by casein kinase 2 (CK2) and protein kinase C (PKC).

It is found in the cytoplasm. Its subcellular location is the cell projection. It localises to the synapse. The protein localises to the synaptosome. The protein resides in the ruffle membrane. It is found in the membrane. Its subcellular location is the cytoplasmic vesicle membrane. It localises to the cytosol. The protein localises to the cell membrane. Functionally, binds to membranes via its F-BAR domain and mediates membrane tubulation. Plays a role in the reorganization of the microtubule cytoskeleton via its interaction with MAPT; this decreases microtubule stability and inhibits MAPT-induced microtubule polymerization. Plays a role in cellular transport processes by recruiting DNM1, DNM2 and DNM3 to membranes. Plays a role in the reorganization of the actin cytoskeleton and in neuron morphogenesis via its interaction with COBL and WASL, and by recruiting COBL to the cell cortex. Plays a role in the regulation of neurite formation, neurite branching and the regulation of neurite length. Required for normal synaptic vesicle endocytosis; this process retrieves previously released neurotransmitters to accommodate multiple cycles of neurotransmission. Required for normal excitatory and inhibitory synaptic transmission. The chain is Protein kinase C and casein kinase substrate in neurons protein 1 (PACSIN1) from Bos taurus (Bovine).